We begin with the raw amino-acid sequence, 227 residues long: MFITLEGIEGSGKTTQIKPLVDCLGQNGYEAVVTREPGATVIGKKIRAILLDPGNSGMSDLCELFLYGADRAQHLSEVIIPALGAGKTVVCDRFTDATTVYQGAARGISKELIDIIHSVVVKDLCPDLTILFDLDPETGLARTVKALTDGERTLDESRFERETLEFHERVRQGYLALAAAEQDRFLVVDARGTQEQVFTEIVSGINRRLGIDLVGIDSAMIDPRVKG.

Residue 7–14 (GIEGSGKT) coordinates ATP.

Belongs to the thymidylate kinase family.

It catalyses the reaction dTMP + ATP = dTDP + ADP. In terms of biological role, phosphorylation of dTMP to form dTDP in both de novo and salvage pathways of dTTP synthesis. The polypeptide is Thymidylate kinase (Desulforapulum autotrophicum (strain ATCC 43914 / DSM 3382 / VKM B-1955 / HRM2) (Desulfobacterium autotrophicum)).